Here is a 1052-residue protein sequence, read N- to C-terminus: Ubiquitin-like modifier-activating enzyme 6 (1052 aa).

Methionine 1 is subject to N-acetylmethionine. The disordered stretch occupies residues 1–21 (MEGSEPVAAHQGEEASCSSWG). Residue arginine 46 coordinates ATP. Position 54 is a phosphothreonine (threonine 54). Residue serine 301 is modified to Phosphoserine. The ATP site is built by alanine 470 and aspartate 497. Positions 499 and 502 each coordinate Mg(2+). The ATP site is built by asparagine 505, arginine 508, glutamine 509, and lysine 521. Position 544 is an N6-acetyllysine (lysine 544). ATP is bound at residue valine 545. Aspartate 569 is a Mg(2+) binding site. An ATP-binding site is contributed by asparagine 570. The active-site Glycyl thioester intermediate is the cysteine 625. Lysine 729 is subject to N6-acetyllysine. Serine 737 bears the Phosphoserine mark.

It belongs to the ubiquitin-activating E1 family. As to quaternary structure, forms a thioester with UBD in cells stimulated with tumor necrosis factor-alpha (TNFa) and interferon-gamma (IFNg). Widely expressed. Isoform 2 is predominantly expressed in testis with higher expression in adult testis than in fetal testis.

It carries out the reaction ATP + ubiquitin + [E1 ubiquitin-activating enzyme]-L-cysteine = AMP + diphosphate + S-ubiquitinyl-[E1 ubiquitin-activating enzyme]-L-cysteine.. Its pathway is protein modification; protein ubiquitination. Activates ubiquitin by first adenylating its C-terminal glycine residue with ATP, and thereafter linking this residue to the side chain of a cysteine residue in E1, yielding a ubiquitin-E1 thioester and free AMP. Specific for ubiquitin, does not activate ubiquitin-like peptides. Also activates UBD/FAT10 conjugation via adenylation of its C-terminal glycine. Differs from UBE1 in its specificity for substrate E2 charging. Does not charge cell cycle E2s, such as CDC34. Essential for embryonic development. Isoform 2 may play a key role in ubiquitin system and may influence spermatogenesis and male fertility. In Homo sapiens (Human), this protein is Ubiquitin-like modifier-activating enzyme 6 (UBA6).